The primary structure comprises 499 residues: BTB/POZ domain-containing protein 16 (499 aa).

The 57-residue stretch at 143–199 folds into the BTB domain; sequence INDPLVTREAFATALKNLYMQEVKICLDDVLGVLAAAHILQFGSLFQRCVTVMMSGL.

In Bos taurus (Bovine), this protein is BTB/POZ domain-containing protein 16 (BTBD16).